We begin with the raw amino-acid sequence, 689 residues long: DNA ligase (689 aa).

NAD(+) is bound by residues 35 to 39, 84 to 85, and E122; these read DEVYD and SL. K124 acts as the N6-AMP-lysine intermediate in catalysis. Positions 145, 182, 308, and 332 each coordinate NAD(+). Zn(2+)-binding residues include C426, C429, C444, and C449. In terms of domain architecture, BRCT spans 612-689; that stretch reads TTEKSLNGKR…NETELIQMCR (78 aa).

The protein belongs to the NAD-dependent DNA ligase family. LigA subfamily. Mg(2+) serves as cofactor. The cofactor is Mn(2+).

It catalyses the reaction NAD(+) + (deoxyribonucleotide)n-3'-hydroxyl + 5'-phospho-(deoxyribonucleotide)m = (deoxyribonucleotide)n+m + AMP + beta-nicotinamide D-nucleotide.. Functionally, DNA ligase that catalyzes the formation of phosphodiester linkages between 5'-phosphoryl and 3'-hydroxyl groups in double-stranded DNA using NAD as a coenzyme and as the energy source for the reaction. It is essential for DNA replication and repair of damaged DNA. This Thermosynechococcus vestitus (strain NIES-2133 / IAM M-273 / BP-1) protein is DNA ligase.